The sequence spans 280 residues: Acetyl-coenzyme A carboxylase carboxyl transferase subunit beta (280 aa).

The region spanning 26–280 is the CoA carboxyltransferase N-terminal domain; the sequence is LWQKCPRCGE…TKLLAWHSQK (255 aa). Zn(2+) contacts are provided by C30, C33, C49, and C52. A C4-type zinc finger spans residues 30–52; that stretch reads CPRCGEIIFNKELEKNFKVCPKC.

Belongs to the AccD/PCCB family. Acetyl-CoA carboxylase is a heterohexamer composed of biotin carboxyl carrier protein (AccB), biotin carboxylase (AccC) and two subunits each of ACCase subunit alpha (AccA) and ACCase subunit beta (AccD). Zn(2+) serves as cofactor.

Its subcellular location is the cytoplasm. It catalyses the reaction N(6)-carboxybiotinyl-L-lysyl-[protein] + acetyl-CoA = N(6)-biotinyl-L-lysyl-[protein] + malonyl-CoA. The protein operates within lipid metabolism; malonyl-CoA biosynthesis; malonyl-CoA from acetyl-CoA: step 1/1. Component of the acetyl coenzyme A carboxylase (ACC) complex. Biotin carboxylase (BC) catalyzes the carboxylation of biotin on its carrier protein (BCCP) and then the CO(2) group is transferred by the transcarboxylase to acetyl-CoA to form malonyl-CoA. This is Acetyl-coenzyme A carboxylase carboxyl transferase subunit beta from Carboxydothermus hydrogenoformans (strain ATCC BAA-161 / DSM 6008 / Z-2901).